An 80-amino-acid polypeptide reads, in one-letter code: uncharacterized protein (80 aa).

Positions 1–15 are cleaved as a signal peptide; that stretch reads MVKLSFTLRFGDVWV.

This is an uncharacterized protein from Archaeoglobus fulgidus (strain ATCC 49558 / DSM 4304 / JCM 9628 / NBRC 100126 / VC-16).